The following is a 174-amino-acid chain: Vimentin-type intermediate filament-associated coiled-coil protein (174 aa).

The stretch at L7–L97 forms a coiled coil. Residues G128–V174 are disordered.

The protein resides in the cytoplasm. This chain is Vimentin-type intermediate filament-associated coiled-coil protein (Vmac), found in Mus musculus (Mouse).